The following is a 1192-amino-acid chain: Probable ATP-dependent RNA helicase kurz (1192 aa).

Residues 170–214 (ELQAKRKNPNVISVEEDDEDSSSSDEDDEEAPAQSAPIAIPTPVS) are disordered. A compositionally biased stretch (acidic residues) spans 183 to 200 (VEEDDEDSSSSDEDDEEA). The 167-residue stretch at 270–436 (METINENPIV…TRLFKIPPPL (167 aa)) folds into the Helicase ATP-binding domain. 283-290 (GETGSGKT) contributes to the ATP binding site. Residues 379–382 (DEAH) carry the DEAH box motif. The interval 504 to 529 (APTKDVAKNGKVSEEEKEETIDDAAS) is disordered. Residues 505-517 (PTKDVAKNGKVSE) are compositionally biased toward basic and acidic residues. Serine 529 is modified (phosphoserine). Threonine 530 carries the phosphothreonine modification. The 207-residue stretch at 540 to 746 (DMKRVIRNIR…DLMLQMRCMG (207 aa)) folds into the Helicase C-terminal domain. A compositionally biased stretch (basic and acidic residues) spans 567–583 (DDYKLPGDDTEADMHEQ). The interval 567-612 (DDYKLPGDDTEADMHEQPDEDDEQEGLEEDNDDELGLEDESGMGSG) is disordered. Residues 584–607 (PDEDDEQEGLEEDNDDELGLEDES) show a composition bias toward acidic residues.

Belongs to the DEAD box helicase family. DEAH subfamily.

It catalyses the reaction ATP + H2O = ADP + phosphate + H(+). The chain is Probable ATP-dependent RNA helicase kurz (kz) from Drosophila melanogaster (Fruit fly).